A 202-amino-acid chain; its full sequence is MEIGFTFLDEIVHGVRWDAKYATWDNFTGKPVDGYEVNRIVGTYELAESLLKAKELAATQGYGLLLWDGYRPKRAVNCFMQWAAQPENNLTKESYYPNIDRTEMISKGYVASKSSHSRGSAIDLTLYRLDTGELVPMGSRFDFMDERSHHAANGISCNEAQNRRRLRSIMENSGFEAYSLEWWHYVLRDEPYPNSYFDFPVK.

2 residues coordinate Zn(2+): His-116 and Asp-123. Glu-181 serves as the catalytic Proton donor/acceptor. Zn(2+) is bound at residue His-184.

Belongs to the peptidase M15D family. In terms of assembly, homodimer. Zn(2+) serves as cofactor. It depends on Fe(2+) as a cofactor. Requires Co(2+) as cofactor. The cofactor is Ni(2+).

The enzyme catalyses D-alanyl-D-alanine + H2O = 2 D-alanine. Its activity is regulated as follows. Inhibited by aminoalkyl phosphinate analogs. Catalyzes hydrolysis of the D-alanyl-D-alanine dipeptide. This is D-alanyl-D-alanine dipeptidase (vanX) from Enterococcus faecium (Streptococcus faecium).